A 469-amino-acid chain; its full sequence is MSEPLYAPRTPIFPRQISGAFRTAKWWILAVSLGIYLLTPWLRWDRGPNLPDQAVLIDIAGRRFFLFGIQIWPHEFYFVAGLLIMAGLGLFLFTSAAGRVWCGYACPQTVWTDLFLLVERRIEGDRNAQIRLHRQAWTAEKVWKRLLKWSVWAAISLLTGGAWVFYFADAPTLLNGLVTLTAHPVAWITIFVLTATTFVFAGFMREQICIYACPWPRIQAALMDEETITVAYRDWRGEPRGKRSETGRGDCIDCMACVNVCPMGIDIREGQQMACITCGLCIDACDDTMDRIGRPRGLIGYLALSDEHLERAGDTPKPAWRRLFRLRTSLYAVLWAGVGVTLIAALLLRPAVDLAVTPVRNPLFVTLSDGSIRNAYELRLRNMSGEDRRFRLAVDGSAGLRPSIEGSAGLDVPVAANATGLVRLYLTAPQGSDPATGALTDLRIRLDDAGGPEGGPVAAVKAAFHGARS.

The Cytoplasmic portion of the chain corresponds to 1–23; that stretch reads MSEPLYAPRTPIFPRQISGAFRT. Residues 24-44 traverse the membrane as a helical segment; sequence AKWWILAVSLGIYLLTPWLRW. At 45 to 75 the chain is on the periplasmic side; the sequence is DRGPNLPDQAVLIDIAGRRFFLFGIQIWPHE. The chain crosses the membrane as a helical span at residues 76 to 96; the sequence is FYFVAGLLIMAGLGLFLFTSA. The Cytoplasmic portion of the chain corresponds to 97 to 149; sequence AGRVWCGYACPQTVWTDLFLLVERRIEGDRNAQIRLHRQAWTAEKVWKRLLKW. The chain crosses the membrane as a helical span at residues 150–170; it reads SVWAAISLLTGGAWVFYFADA. The Periplasmic portion of the chain corresponds to 171-183; the sequence is PTLLNGLVTLTAH. The chain crosses the membrane as a helical span at residues 184 to 204; it reads PVAWITIFVLTATTFVFAGFM. At 205-327 the chain is on the cytoplasmic side; the sequence is REQICIYACP…PAWRRLFRLR (123 aa). 4Fe-4S ferredoxin-type domains are found at residues 242–270 and 266–295; these read KRSE…IREG and DIRE…IGRP. Residues Cys251, Cys254, Cys257, Cys261, Cys275, Cys278, Cys281, and Cys285 each coordinate [4Fe-4S] cluster. Residues 328 to 348 traverse the membrane as a helical segment; the sequence is TSLYAVLWAGVGVTLIAALLL. The Periplasmic segment spans residues 349–469; it reads RPAVDLAVTP…VKAAFHGARS (121 aa).

It localises to the cell membrane. Predicted to be involved in a redox process. The polypeptide is Protein RdxA (rdxA) (Cereibacter sphaeroides (strain ATCC 17023 / DSM 158 / JCM 6121 / CCUG 31486 / LMG 2827 / NBRC 12203 / NCIMB 8253 / ATH 2.4.1.) (Rhodobacter sphaeroides)).